The chain runs to 257 residues: GTP cyclohydrolase FolE2 (257 aa).

This sequence belongs to the GTP cyclohydrolase IV family.

The enzyme catalyses GTP + H2O = 7,8-dihydroneopterin 3'-triphosphate + formate + H(+). Its pathway is cofactor biosynthesis; 7,8-dihydroneopterin triphosphate biosynthesis; 7,8-dihydroneopterin triphosphate from GTP: step 1/1. Functionally, converts GTP to 7,8-dihydroneopterin triphosphate. This Dictyoglomus turgidum (strain DSM 6724 / Z-1310) protein is GTP cyclohydrolase FolE2.